Reading from the N-terminus, the 370-residue chain is Immunoglobulin superfamily member 5 (370 aa).

A signal peptide spans 1–24 (MEGSWRDVLAVLVILAQLTASGSS). Ig-like V-type domains lie at 25–125 (YQII…LSVQ) and 128–215 (GTLN…KSLT). The Extracellular segment spans residues 25–239 (YQIIEGPQNV…EEGPALPTWA (215 aa)). Residues Asn33 and Asn45 are each glycosylated (N-linked (GlcNAc...) asparagine). Cysteines 46 and 109 form a disulfide. Asn146, Asn196, and Asn217 each carry an N-linked (GlcNAc...) asparagine glycan. Cys149 and Cys201 are joined by a disulfide. The helical transmembrane segment at 240-260 (IILLAVAFSLLLILIIVLIII) threads the bilayer. At 261 to 370 (FCCCCASRRE…PQKVRNVTLV (110 aa)) the chain is on the cytoplasmic side. The tract at residues 284 to 359 (ANMRTNKADP…THPRVSFDIA (76 aa)) is disordered. The span at 289 to 301 (NKADPETKLKGGK) shows a compositional bias: basic and acidic residues.

Belongs to the immunoglobulin superfamily. Interacts with MAGI1 at tight junctions, forms a tripartite complex with NPHS1. Interacts with LNX1 isoform 2 via its PDZ 2 domain, it may also interact with other isoforms containing this domain. N-glycosylated. In terms of tissue distribution, localized to kidney glomeruli and small intestinal epithelial cells. In kidney glomeruli, it is localized at slit diaphragm. Also found in spermatogonia, gonocytes, hematopoietic stem cells and Sertoli cells.

The protein resides in the apical cell membrane. It localises to the cell junction. Its subcellular location is the tight junction. Provides, together with MAGI1, an adhesion machinery at tight junctions, which may regulate the permeability of kidney glomerulus and small intestinal epithelial cells. Mediates calcium-independent homophilic cell adhesion. In testis, it may function as a cell adhesion molecule rather than a tight-junction protein. It may participate in the adhesion between spermatogonia-spermatogonia, spermatogonia-Sertoli cells, and Sertoli cells-Sertoli cells. The protein is Immunoglobulin superfamily member 5 (Igsf5) of Mus musculus (Mouse).